Here is a 217-residue protein sequence, read N- to C-terminus: Protein GrpE (217 aa).

It belongs to the GrpE family. Homodimer.

The protein localises to the cytoplasm. Participates actively in the response to hyperosmotic and heat shock by preventing the aggregation of stress-denatured proteins, in association with DnaK and GrpE. It is the nucleotide exchange factor for DnaK and may function as a thermosensor. Unfolded proteins bind initially to DnaJ; upon interaction with the DnaJ-bound protein, DnaK hydrolyzes its bound ATP, resulting in the formation of a stable complex. GrpE releases ADP from DnaK; ATP binding to DnaK triggers the release of the substrate protein, thus completing the reaction cycle. Several rounds of ATP-dependent interactions between DnaJ, DnaK and GrpE are required for fully efficient folding. This Mycoplasma pneumoniae (strain ATCC 29342 / M129 / Subtype 1) (Mycoplasmoides pneumoniae) protein is Protein GrpE.